A 156-amino-acid chain; its full sequence is Small ribosomal subunit protein uS7 (156 aa).

It belongs to the universal ribosomal protein uS7 family. In terms of assembly, part of the 30S ribosomal subunit. Contacts proteins S9 and S11.

Its function is as follows. One of the primary rRNA binding proteins, it binds directly to 16S rRNA where it nucleates assembly of the head domain of the 30S subunit. Is located at the subunit interface close to the decoding center, probably blocks exit of the E-site tRNA. The polypeptide is Small ribosomal subunit protein uS7 (Aliivibrio fischeri (strain MJ11) (Vibrio fischeri)).